The following is a 208-amino-acid chain: Outer-membrane lipoprotein carrier protein (208 aa).

An N-terminal signal peptide occupies residues 1 to 21 (MRLIRTLFVAALAMGTSLAHA).

Belongs to the LolA family. In terms of assembly, monomer.

It localises to the periplasm. Participates in the translocation of lipoproteins from the inner membrane to the outer membrane. Only forms a complex with a lipoprotein if the residue after the N-terminal Cys is not an aspartate (The Asp acts as a targeting signal to indicate that the lipoprotein should stay in the inner membrane). This is Outer-membrane lipoprotein carrier protein from Pseudomonas paraeruginosa (strain DSM 24068 / PA7) (Pseudomonas aeruginosa (strain PA7)).